A 494-amino-acid polypeptide reads, in one-letter code: Cysteine protease ATG4 (494 aa).

The APEAR motif lies at Phe-102–Ile-105. The active-site Nucleophile is Cys-147. The residue at position 307 (Ser-307) is a Phosphoserine. Residues Asp-322 and His-324 contribute to the active site. Cys-338 and Cys-394 are disulfide-bonded. Residues Tyr-424–Ile-427 carry the LIR motif. Ser-488 is subject to Phosphoserine.

It belongs to the peptidase C54 family. In terms of assembly, interacts with ATG8. Interacts with TUB1 and TUB2. Phosphorylation at Ser-307 by ATG1 inhibits autophagy: it takes place on autophagosome membranes and decreases its interaction with ATG8, thereby impairing deconjugation of PE-conjugated forms of ATG8. In terms of processing, formation of a disulfide bond between Cys-338 and Cys-394 leads to reduced autophagy. The disulfide bond is reduced by thioredoxin.

Its subcellular location is the cytoplasm. It localises to the nucleus. It is found in the preautophagosomal structure. The catalysed reaction is [protein]-C-terminal L-amino acid-glycyl-phosphatidylethanolamide + H2O = [protein]-C-terminal L-amino acid-glycine + a 1,2-diacyl-sn-glycero-3-phosphoethanolamine. In terms of biological role, cysteine protease that plays a key role in cytoplasm to vacuole transport (Cvt) and autophagy by mediating both proteolytic activation and delipidation of ATG8. Required for selective autophagic degradation of the nucleus (nucleophagy) as well as for mitophagy which contributes to regulate mitochondrial quantity and quality by eliminating the mitochondria to a basal level to fulfill cellular energy requirements and preventing excess ROS production. The protease activity is required for proteolytic activation of ATG8: cleaves the C-terminal amino acid of ATG8 to reveal a C-terminal glycine. ATG8 ubiquitin-like activity requires the exposure of the glycine at the C-terminus for its conjugation to phosphatidylethanolamine (PE) and its insertion to membranes, which is necessary for autophagy. The ATG8-PE conjugate mediates tethering between adjacent membranes and stimulates membrane hemifusion, leading to expansion of the autophagosomal membrane during autophagy. In addition to the protease activity, also catalyzes deconjugation of PE-conjugated forms of ATG8 during macroautophagy: ATG8 delipidation is required to release the protein from membranes, which facilitates multiple events during macroautophagy, and especially for efficient autophagosome biogenesis, the assembly of ATG9-containing tubulovesicular clusters into phagophores/autophagosomes, and for the disassembly of PAS-associated ATG components. ATG8 delipidation by ATG4 also recycles ATG8-PE generated on inappropriate membranes to maintain a reservoir of unlipidated ATG8 that is required for autophagosome formation at the PAS. This Saccharomyces cerevisiae (strain YJM789) (Baker's yeast) protein is Cysteine protease ATG4 (ATG4).